Reading from the N-terminus, the 362-residue chain is Porin Omp2b (362 aa).

The first 22 residues, methionine 1–alanine 22, serve as a signal peptide directing secretion.

The protein belongs to the alphaproteobacteria porin family. As to quaternary structure, homotrimer.

The protein resides in the cell outer membrane. Functionally, forms passive diffusion pores that allow small molecular weight hydrophilic materials across the outer membrane. The polypeptide is Porin Omp2b (omp2b) (Brucella abortus (strain S19)).